The primary structure comprises 289 residues: Phenylalanine-4-hydroxylase (289 aa).

Fe cation-binding residues include histidine 144, histidine 149, and glutamate 189.

Belongs to the biopterin-dependent aromatic amino acid hydroxylase family. Fe(2+) serves as cofactor.

It catalyses the reaction (6R)-L-erythro-5,6,7,8-tetrahydrobiopterin + L-phenylalanine + O2 = (4aS,6R)-4a-hydroxy-L-erythro-5,6,7,8-tetrahydrobiopterin + L-tyrosine. The protein operates within amino-acid degradation; L-phenylalanine degradation; acetoacetate and fumarate from L-phenylalanine: step 1/6. The polypeptide is Phenylalanine-4-hydroxylase (phhA) (Vibrio cholerae serotype O1 (strain ATCC 39315 / El Tor Inaba N16961)).